Here is a 66-residue protein sequence, read N- to C-terminus: Large ribosomal subunit protein eL24 (66 aa).

Residues Cys7, Cys10, Cys33, and Cys37 each coordinate Zn(2+). The segment at Cys7–Cys37 adopts a C4-type zinc-finger fold.

It belongs to the eukaryotic ribosomal protein eL24 family. Part of the 50S ribosomal subunit. Forms a cluster with proteins L3 and L14. The cofactor is Zn(2+).

Its function is as follows. Binds to the 23S rRNA. The protein is Large ribosomal subunit protein eL24 of Pyrococcus furiosus (strain ATCC 43587 / DSM 3638 / JCM 8422 / Vc1).